A 579-amino-acid polypeptide reads, in one-letter code: General transcription and DNA repair factor IIH subunit TFB1-3 (579 aa).

2 consecutive BSD domains span residues 107–161 and 186–238; these read LTPA…GKDS and RTNR…YLYS.

The protein belongs to the TFB1 family. Component of the 7-subunit TFIIH core complex composed of XPB, XPD, TFB1/GTF2H1, GTF2H2/P44, TFB4/GTF2H3, TFB2/GTF2H4 and TFB5/GTF2H5, which is active in NER. The core complex associates with the 3-subunit CDK-activating kinase (CAK) module composed of CYCH1/cyclin H1, CDKD and MAT1/At4g30820 to form the 10-subunit holoenzyme (holo-TFIIH) active in transcription.

The protein localises to the nucleus. In terms of biological role, component of the general transcription and DNA repair factor IIH (TFIIH) core complex, which is involved in general and transcription-coupled nucleotide excision repair (NER) of damaged DNA and, when complexed to CAK, in RNA transcription by RNA polymerase II. In NER, TFIIH acts by opening DNA around the lesion to allow the excision of the damaged oligonucleotide and its replacement by a new DNA fragment. In transcription, TFIIH has an essential role in transcription initiation. When the pre-initiation complex (PIC) has been established, TFIIH is required for promoter opening and promoter escape. Phosphorylation of the C-terminal tail (CTD) of the largest subunit of RNA polymerase II by the kinase module CAK controls the initiation of transcription. In Arabidopsis thaliana (Mouse-ear cress), this protein is General transcription and DNA repair factor IIH subunit TFB1-3.